The sequence spans 159 residues: MRVAVYPGSFDPITNGHLDIIKRGAKVFDKVIVAVLVNVDKKYLFESSERVELIKRVTRDIENVEIRSFDGLLVNFLKECKTNIILKGLRTASDFEYEFQMAFINKELDDDTETVCMMSSAKNIHISSSTVKQVARFGGDISGLVPNEIISDIMSRINL.

Ser-9 is a binding site for substrate. ATP is bound by residues 9–10 (SF) and His-17. 3 residues coordinate substrate: Lys-41, Leu-73, and Lys-87. Residues 88 to 90 (GLR), Glu-98, and 123 to 129 (NIHISSS) contribute to the ATP site.

It belongs to the bacterial CoaD family. Homohexamer. Mg(2+) is required as a cofactor.

Its subcellular location is the cytoplasm. The catalysed reaction is (R)-4'-phosphopantetheine + ATP + H(+) = 3'-dephospho-CoA + diphosphate. It functions in the pathway cofactor biosynthesis; coenzyme A biosynthesis; CoA from (R)-pantothenate: step 4/5. Reversibly transfers an adenylyl group from ATP to 4'-phosphopantetheine, yielding dephospho-CoA (dPCoA) and pyrophosphate. This is Phosphopantetheine adenylyltransferase from Clostridium beijerinckii (strain ATCC 51743 / NCIMB 8052) (Clostridium acetobutylicum).